The chain runs to 130 residues: kinetoplast-associated protein 2-1 (130 aa).

Residues 1-10 constitute a propeptide that is removed on maturation; sequence MLRRTVSNFA. The interval 89 to 130 is disordered; it reads LTKKWNETKQAQREKAQKAQKKTKSAKSKVKKAAKKSKKSKK. Basic and acidic residues predominate over residues 92-105; it reads KWNETKQAQREKAQ. Residues 106–130 are compositionally biased toward basic residues; sequence KAQKKTKSAKSKVKKAAKKSKKSKK.

Belongs to the KAP family. Associates with the kinetoplast DNA network.

The protein localises to the mitochondrion matrix. Its subcellular location is the kinetoplast. Its function is as follows. Histone H1-like DNA-binding protein involved in the organization and segregation of kinetoplast DNA (kDNA). The mitochondrial DNA of kinetoplastid protozoa consists of about 5,000 minicircles and 20 to 30 maxicircles. These circular DNAs are held together by catenation into a highly organized compact disk structure referred to as a kinetoplast DNA (kDNA) network. Binds preferentially to a specific fragment of minicircle DNA and is able to compact kDNA networks through DNA charge neutralization and condensation. This chain is kinetoplast-associated protein 2-1 (KAP2-1), found in Crithidia fasciculata.